The chain runs to 432 residues: Zinc finger protein 829 (432 aa).

A KRAB domain is found at Val35–Ser106. The C2H2-type 1 zinc-finger motif lies at Trp156–His178. The segment at Tyr184–His206 adopts a C2H2-type 2; degenerate zinc-finger fold. C2H2-type zinc fingers lie at residues Tyr212–His234, Tyr240–His262, Tyr268–His290, Tyr296–His318, Tyr324–His346, Tyr352–His374, Tyr380–His402, and Tyr408–His430.

This sequence belongs to the krueppel C2H2-type zinc-finger protein family.

The protein resides in the nucleus. In terms of biological role, may be involved in transcriptional regulation. This is Zinc finger protein 829 (ZNF829) from Homo sapiens (Human).